Consider the following 467-residue polypeptide: UDP-N-acetylmuramate--L-alanine ligase (467 aa).

Residue 114–120 (GTHGKTT) coordinates ATP.

Belongs to the MurCDEF family.

The protein resides in the cytoplasm. The enzyme catalyses UDP-N-acetyl-alpha-D-muramate + L-alanine + ATP = UDP-N-acetyl-alpha-D-muramoyl-L-alanine + ADP + phosphate + H(+). It participates in cell wall biogenesis; peptidoglycan biosynthesis. Functionally, cell wall formation. This is UDP-N-acetylmuramate--L-alanine ligase from Azorhizobium caulinodans (strain ATCC 43989 / DSM 5975 / JCM 20966 / LMG 6465 / NBRC 14845 / NCIMB 13405 / ORS 571).